The following is a 122-amino-acid chain: Large ribosomal subunit protein uL14c (122 aa).

This sequence belongs to the universal ribosomal protein uL14 family. Part of the 50S ribosomal subunit.

The protein localises to the plastid. Its subcellular location is the chloroplast. Its function is as follows. Binds to 23S rRNA. The polypeptide is Large ribosomal subunit protein uL14c (Chloranthus spicatus (Chulantree)).